Here is a 149-residue protein sequence, read N- to C-terminus: Arginine repressor (149 aa).

The protein belongs to the ArgR family.

The protein localises to the cytoplasm. The protein operates within amino-acid biosynthesis; L-arginine biosynthesis [regulation]. Regulates arginine biosynthesis genes. This chain is Arginine repressor, found in Listeria welshimeri serovar 6b (strain ATCC 35897 / DSM 20650 / CCUG 15529 / CIP 8149 / NCTC 11857 / SLCC 5334 / V8).